The primary structure comprises 142 residues: Midkine (142 aa).

The N-terminal stretch at 1-21 (MQPRGLLLLLALLLLAAAAEA) is a signal peptide. 5 disulfide bridges follow: Cys-36–Cys-60, Cys-44–Cys-69, Cys-51–Cys-73, Cys-83–Cys-115, and Cys-93–Cys-125.

The protein belongs to the pleiotrophin family.

It is found in the cell surface. The protein localises to the secreted. The protein resides in the extracellular space. Its subcellular location is the extracellular matrix. It localises to the basement membrane. In terms of biological role, has mitogenic activity, and neurite extension activity for PC12 cells. The chain is Midkine (RIHB) from Gallus gallus (Chicken).